The chain runs to 354 residues: MSVIDVHIRIDSLRRLIDENMQMEIWPQLLRMCSDTVSDVDVDTSALMAFLVTVARKSQTAFANANAATASAFAAGGARAPAAMPAPAPPAQTVFGALVSAPSAEPALVDMRRYRAAARRLIQYYSLNTTTSSEFKVRDVVMTMIFLQRSENYHQLFKLLDTAMDDFTCRPQLTEAQVSTLLHTLRTLLEMPTTPIDMTTVDVMRSSFARCFASPVLRYAKVVLLQGETVSRDERTTLEELLVERGDNIQKLQPQQYVASGSEIPFCDDPEFINRLLKHLDPYPLSRMYYNAANSMFYTTMENYAVANCKFNIEDYNRIFKGAESIKKHANKTAEDSDELDIYLGTTAKRKKII.

A Nuclear localization signal motif is present at residues 349–352; the sequence is KRKK.

It belongs to the baculoviridae C42 protein family.

The protein resides in the host nucleus. This Orgyia pseudotsugata (Douglas-fir tussock moth) protein is Protein C42.